Here is a 170-residue protein sequence, read N- to C-terminus: Fibroblast growth factor 2 (170 aa).

The disordered stretch occupies residues 1-21 (VGGRGRGRGTAAAARREPGGA). 3 positions are modified to omega-N-methylarginine; alternate: arginine 4, arginine 6, and arginine 8. Arginine 4, arginine 6, and arginine 8 each carry symmetric dimethylarginine; alternate. Over residues 9-21 (GTAAAARREPGGA) the composition is skewed to low complexity. Asparagine 51 serves as a coordination point for heparin. Residue tyrosine 97 is modified to Phosphotyrosine; by TEC. Lysine 110 is covalently cross-linked (Glycyl lysine isopeptide (Lys-Gly) (interchain with G-Cter in SUMO1)). The tract at residues 143–159 (KRTGQYKLGSKTGPGQK) is heparin-binding.

Belongs to the heparin-binding growth factors family. As to quaternary structure, monomer. Homodimer. Interacts with FGFR1, FGFR2, FGFR3 and FGFR4. Affinity between fibroblast growth factors (FGFs) and their receptors is increased by heparan sulfate glycosaminoglycans that function as coreceptors. Interacts with CSPG4, FGFBP1 and TEC. Found in a complex with FGFBP1, FGF1 and FGF2. Interacts with FGFBP3. Interacts with integrin ITGAV:ITGB3; the interaction is required for FGF2 signaling. Interacts with SNORC (via the extracellular domain). Interacts with glypican GPC3. In terms of processing, the N-terminus of isoform 2 is blocked. Post-translationally, phosphorylation at Tyr-97 regulates FGF2 unconventional secretion.

The protein resides in the secreted. Its subcellular location is the nucleus. Its function is as follows. Acts as a ligand for FGFR1, FGFR2, FGFR3 and FGFR4. Also acts as an integrin ligand which is required for FGF2 signaling. Binds to integrin ITGAV:ITGB3. Plays an important role in the regulation of cell survival, cell division, cell differentiation and cell migration. Functions as a potent mitogen in vitro. Can induce angiogenesis. Mediates phosphorylation of ERK1/2 and thereby promotes retinal lens fiber differentiation. The sequence is that of Fibroblast growth factor 2 (FGF2) from Cavia porcellus (Guinea pig).